The sequence spans 379 residues: Alanine racemase (379 aa).

The active-site Proton acceptor; specific for D-alanine is lysine 35. Position 35 is an N6-(pyridoxal phosphate)lysine (lysine 35). Arginine 133 serves as a coordination point for substrate. The active-site Proton acceptor; specific for L-alanine is tyrosine 265. Methionine 312 is a binding site for substrate.

This sequence belongs to the alanine racemase family. Requires pyridoxal 5'-phosphate as cofactor.

It catalyses the reaction L-alanine = D-alanine. Its pathway is amino-acid biosynthesis; D-alanine biosynthesis; D-alanine from L-alanine: step 1/1. In terms of biological role, catalyzes the interconversion of L-alanine and D-alanine. May also act on other amino acids. In Treponema denticola (strain ATCC 35405 / DSM 14222 / CIP 103919 / JCM 8153 / KCTC 15104), this protein is Alanine racemase (alr).